A 138-amino-acid chain; its full sequence is Translation initiation factor 5A (138 aa).

Lys37 bears the Hypusine mark.

The protein belongs to the eIF-5A family.

The protein resides in the cytoplasm. Its function is as follows. Functions by promoting the formation of the first peptide bond. The polypeptide is Translation initiation factor 5A (eIF5A) (Thermococcus sibiricus (strain DSM 12597 / MM 739)).